We begin with the raw amino-acid sequence, 491 residues long: Ribonuclease G (491 aa).

The S1 motif domain occupies 40 to 129 (GNIYKGRVTR…LTTDITLPSR (90 aa)). 2 residues coordinate Mg(2+): aspartate 305 and aspartate 348.

This sequence belongs to the RNase E/G family. RNase G subfamily. As to quaternary structure, homodimer, in equilibrium with possible higher multimers. Mg(2+) serves as cofactor.

It is found in the cytoplasm. In terms of biological role, an endonuclease that acts in the processing of the 5'-end of 16S rRNA and 23S rRNA. It prefers 5'-monophosphorylated substrates and cleaves single-stranded sites rich in A and U residues; contributes to tRNA processing and mRNA turnover. This Haemophilus influenzae (strain ATCC 51907 / DSM 11121 / KW20 / Rd) protein is Ribonuclease G (rng).